The sequence spans 517 residues: GMP synthase [glutamine-hydrolyzing] (517 aa).

In terms of domain architecture, Glutamine amidotransferase type-1 spans 9-202 (KIIVLDYGSQ…AFNVCKAKGD (194 aa)). Residue C86 is the Nucleophile of the active site. Residues H176 and E178 contribute to the active site. One can recognise a GMPS ATP-PPase domain in the interval 203–392 (WSMDSFIDME…LGMPDEIVWR (190 aa)). 230–236 (SGGVDSS) serves as a coordination point for ATP.

In terms of assembly, homodimer.

The catalysed reaction is XMP + L-glutamine + ATP + H2O = GMP + L-glutamate + AMP + diphosphate + 2 H(+). It functions in the pathway purine metabolism; GMP biosynthesis; GMP from XMP (L-Gln route): step 1/1. In terms of biological role, catalyzes the synthesis of GMP from XMP. The chain is GMP synthase [glutamine-hydrolyzing] from Streptococcus mutans serotype c (strain ATCC 700610 / UA159).